The primary structure comprises 108 residues: Large ribosomal subunit protein eL36x (108 aa).

2 disordered regions span residues 13-34 and 75-108; these read GHVV…KTSK and KLGT…EKKK. Basic residues predominate over residues 75-84; the sequence is KLGTHKRAKR.

It belongs to the eukaryotic ribosomal protein eL36 family.

The chain is Large ribosomal subunit protein eL36x (RPL36C) from Arabidopsis thaliana (Mouse-ear cress).